A 211-amino-acid chain; its full sequence is Glycerol-3-phosphate acyltransferase (211 aa).

Helical transmembrane passes span 5–25 (ALGM…ILFC), 58–78 (VLVF…ALGV), 80–100 (PLYL…PVFF), 112–132 (LGAI…TWLL), and 138–158 (GYSS…VWWF).

It belongs to the PlsY family. Probably interacts with PlsX.

It is found in the cell inner membrane. It carries out the reaction an acyl phosphate + sn-glycerol 3-phosphate = a 1-acyl-sn-glycero-3-phosphate + phosphate. Its pathway is lipid metabolism; phospholipid metabolism. Its function is as follows. Catalyzes the transfer of an acyl group from acyl-phosphate (acyl-PO(4)) to glycerol-3-phosphate (G3P) to form lysophosphatidic acid (LPA). This enzyme utilizes acyl-phosphate as fatty acyl donor, but not acyl-CoA or acyl-ACP. In Pectobacterium atrosepticum (strain SCRI 1043 / ATCC BAA-672) (Erwinia carotovora subsp. atroseptica), this protein is Glycerol-3-phosphate acyltransferase.